Reading from the N-terminus, the 347-residue chain is Probable magnetosome protein Mms36 (347 aa).

A helical membrane pass occupies residues 25–45; the sequence is VLVLYLAIAVVVAVLAWPWLA.

The protein resides in the magnetosome membrane. Functionally, the 4 genes of this operon collectively influence magnetosome size and number. This is Probable magnetosome protein Mms36 from Magnetospirillum gryphiswaldense (strain DSM 6361 / JCM 21280 / NBRC 15271 / MSR-1).